The sequence spans 279 residues: NADPH-dependent 7-cyano-7-deazaguanine reductase (279 aa).

Position 86–88 (Ile-86–Ser-88) interacts with substrate. Position 88-89 (Ser-88–Lys-89) interacts with NADPH. Cys-187 acts as the Thioimide intermediate in catalysis. Residue Asp-194 is the Proton donor of the active site. Residue His-226–Glu-227 participates in substrate binding. Arg-255 to Gly-256 serves as a coordination point for NADPH.

Belongs to the GTP cyclohydrolase I family. QueF type 2 subfamily. In terms of assembly, homodimer.

The protein resides in the cytoplasm. The catalysed reaction is 7-aminomethyl-7-carbaguanine + 2 NADP(+) = 7-cyano-7-deazaguanine + 2 NADPH + 3 H(+). Its pathway is tRNA modification; tRNA-queuosine biosynthesis. Functionally, catalyzes the NADPH-dependent reduction of 7-cyano-7-deazaguanine (preQ0) to 7-aminomethyl-7-deazaguanine (preQ1). The protein is NADPH-dependent 7-cyano-7-deazaguanine reductase of Histophilus somni (strain 129Pt) (Haemophilus somnus).